A 94-amino-acid chain; its full sequence is Large ribosomal subunit protein bL25 (94 aa).

This sequence belongs to the bacterial ribosomal protein bL25 family. Part of the 50S ribosomal subunit; part of the 5S rRNA/L5/L18/L25 subcomplex. Contacts the 5S rRNA. Binds to the 5S rRNA independently of L5 and L18.

In terms of biological role, this is one of the proteins that binds to the 5S RNA in the ribosome where it forms part of the central protuberance. The protein is Large ribosomal subunit protein bL25 of Proteus mirabilis (strain HI4320).